The sequence spans 319 residues: MNSISLAIQDLLDDTEYGLELVLLAGGAGVGHRIHSSRIQKPGLALTGYTEHLHPDRVQVLGNTEISYLQQISEQQALIHIQKLCSYPISCFIVTKGLDPPGFLKAEAERAGIPLLVTPHQSSTFISLITKFLEERLLPTTHIHGVLVDVLGVGVLILGKSGIGKSECALDLVIRGHRLVADDVVYVKKKMPAALVGQAAEAIQHHMEIRGLGVINIKNLFGVSSIREKKIIDMVIELVDWDPVQEYDRLGLDDEVYAILDVELPHIKIPVRPGRNLTSIIEVAARNHLLKGMGYHSAREFHEKLLARMEVRPLGNEVE.

Residues His-144 and Lys-165 contribute to the active site. Position 159–166 (159–166 (GKSGIGKS)) interacts with ATP. Ser-166 contributes to the Mg(2+) binding site. The active-site Proton acceptor; for phosphorylation activity. Proton donor; for dephosphorylation activity is the Asp-183. Residues 207–216 (MEIRGLGVIN) are important for the catalytic mechanism of both phosphorylation and dephosphorylation. Glu-208 contacts Mg(2+). Arg-249 is an active-site residue. The important for the catalytic mechanism of dephosphorylation stretch occupies residues 270–275 (PVRPGR).

The protein belongs to the HPrK/P family. As to quaternary structure, homohexamer. Mg(2+) serves as cofactor.

The catalysed reaction is [HPr protein]-L-serine + ATP = [HPr protein]-O-phospho-L-serine + ADP + H(+). It catalyses the reaction [HPr protein]-O-phospho-L-serine + phosphate + H(+) = [HPr protein]-L-serine + diphosphate. Functionally, catalyzes the ATP- as well as the pyrophosphate-dependent phosphorylation of a specific serine residue in HPr, a phosphocarrier protein of the phosphoenolpyruvate-dependent sugar phosphotransferase system (PTS). HprK/P also catalyzes the pyrophosphate-producing, inorganic phosphate-dependent dephosphorylation (phosphorolysis) of seryl-phosphorylated HPr (P-Ser-HPr). This is HPr kinase/phosphorylase from Geobacter sulfurreducens (strain ATCC 51573 / DSM 12127 / PCA).